The primary structure comprises 284 residues: MSAEKAKAYWQLMRMDRPIGSLLLLWPTVWALVIAAQGIPSWDVLIVFVLGVFLMRSAGCVINDFADRKVDGHVKRTKQRPLPSGKVTAKEAIGLFLVLAVSSFLLVLTMNPLTIQLSFAGLVLAFIYPFMKRYTHIPQLFLGLAFSWAIPMAWAAQTGELPVMVWFVFVINALWTIAYDTQYAMVDRDDDLKIGIKSTAILFGRHDKLIIGVLQLVTLAMLVGLGQFYQLGQSYYWTVLIAASLFVYQQHLIRHRERDLCFRAFLNNNYVGMVIAIGLLVAFW.

7 consecutive transmembrane segments (helical) span residues valine 33–phenylalanine 53, isoleucine 93–leucine 113, histidine 136–alanine 156, glycine 159–tyrosine 179, leucine 209–tyrosine 229, tyrosine 235–leucine 252, and alanine 264–tryptophan 284.

Belongs to the UbiA prenyltransferase family. Mg(2+) serves as cofactor.

The protein resides in the cell inner membrane. The catalysed reaction is all-trans-octaprenyl diphosphate + 4-hydroxybenzoate = 4-hydroxy-3-(all-trans-octaprenyl)benzoate + diphosphate. It participates in cofactor biosynthesis; ubiquinone biosynthesis. Catalyzes the prenylation of para-hydroxybenzoate (PHB) with an all-trans polyprenyl group. Mediates the second step in the final reaction sequence of ubiquinone-8 (UQ-8) biosynthesis, which is the condensation of the polyisoprenoid side chain with PHB, generating the first membrane-bound Q intermediate 3-octaprenyl-4-hydroxybenzoate. This is 4-hydroxybenzoate octaprenyltransferase from Vibrio parahaemolyticus serotype O3:K6 (strain RIMD 2210633).